The chain runs to 559 residues: Formate--tetrahydrofolate ligase (559 aa).

Position 68-75 (68-75) interacts with ATP; sequence TPAGEGKT.

This sequence belongs to the formate--tetrahydrofolate ligase family.

The enzyme catalyses (6S)-5,6,7,8-tetrahydrofolate + formate + ATP = (6R)-10-formyltetrahydrofolate + ADP + phosphate. It functions in the pathway one-carbon metabolism; tetrahydrofolate interconversion. In Rhizobium johnstonii (strain DSM 114642 / LMG 32736 / 3841) (Rhizobium leguminosarum bv. viciae), this protein is Formate--tetrahydrofolate ligase.